The following is a 462-amino-acid chain: beta-Tubulin at 65B (462 aa).

7 residues coordinate GTP: Glu70, Ser137, Gly141, Thr142, Gly143, Asn203, and Asn225. Glu70 is a Mg(2+) binding site. The segment at 420 to 462 (DYRSSAEGEDSGGGGGGGGGRSGSAESGEEEATPEAHCQYCTE) is disordered. The span at 430 to 441 (SGGGGGGGGGRS) shows a compositional bias: gly residues.

It belongs to the tubulin family. As to quaternary structure, dimer of alpha and beta chains. A typical microtubule is a hollow water-filled tube with an outer diameter of 25 nm and an inner diameter of 15 nM. Alpha-beta heterodimers associate head-to-tail to form protofilaments running lengthwise along the microtubule wall with the beta-tubulin subunit facing the microtubule plus end conferring a structural polarity. Microtubules usually have 13 protofilaments but different protofilament numbers can be found in some organisms and specialized cells. Mg(2+) is required as a cofactor.

The protein localises to the cytoplasm. It localises to the cytoskeleton. Tubulin is the major constituent of microtubules, a cylinder consisting of laterally associated linear protofilaments composed of alpha- and beta-tubulin heterodimers. Microtubules grow by the addition of GTP-tubulin dimers to the microtubule end, where a stabilizing cap forms. Below the cap, tubulin dimers are in GDP-bound state, owing to GTPase activity of alpha-tubulin. The polypeptide is beta-Tubulin at 65B (Drosophila melanogaster (Fruit fly)).